Reading from the N-terminus, the 283-residue chain is Protease HtpX (283 aa).

2 helical membrane-spanning segments follow: residues 4–24 and 33–53; these read IALF…ILSV and GGIL…SLFM. Position 139 (His-139) interacts with Zn(2+). Glu-140 is an active-site residue. His-143 serves as a coordination point for Zn(2+). Transmembrane regions (helical) follow at residues 147 to 167 and 192 to 212; these read GDMV…IFLS and FLVS…IAMW. Residue Glu-218 participates in Zn(2+) binding.

Belongs to the peptidase M48B family. Zn(2+) serves as cofactor.

It localises to the cell inner membrane. The protein is Protease HtpX of Glaesserella parasuis serovar 5 (strain SH0165) (Haemophilus parasuis).